The following is a 782-amino-acid chain: MNILKKFMESGNKPELITIPSGQFNLLRSKNSPKAALECIYNNATLSVRKIGKFDYELAVYRVEDDSEGGTGDEAENFEDDTISVLSTQSKKKEEEWSVEISDKIMFHKTWDKQGNVALVWENLRGDEQDEKVQFVVAADVSFSDVEQFIQTVYRCQFEVRNKKSSLTASADDLKEIEHRSTRLFVQDDDDELDSSSDDFQDAKDTSFEHEKESEILERTPSPLKKVPEGEYCCLVMSSLYMYDPIQEKFILQEPVVKVAIIDTGKYEFWLAIEGKDNRLGTQVAPNINPTFELATDAFLFNYTLQNITLSYMLKFKDLDKCIQFRFAWVKCLWMTLNKETWTDVPEKEKDYILDSSSVPLEKQFDDILHIDDRSNEERDKESSESENDSEDEDDENDHSKRIISSEAFEEPRRATSKGNSSLTVAFRNNRSYVTRDNRIGVFKTDDEDDSLEFVAAIKNISNLGGKSIDPHKPMLYMEDRNLILTDGENENKLYKMDIERGKVIEEWSTGDKNVVQYGPTKKFDQMTPEQTIVGVSQKGVFKIDPRINGKNKIAVDESKDYVGKYNFSSIGTTESGYIAIGSEKGDIKLYDRLGIRAKTAIPSLGQAIKFITTSADGKWLLATCESTLLLMDLKIKDGKNAGNIGFLKSFPASENVKTYVLKIRPEHSASILTYTKKPIRFTKAYFNTGIGQQEQTIVTSTGPYAISWSLKGILNQDGSNNYPYRIRRYNADVVADNFEFGSDKKVIVALKDDVSLSKVKSFKQPSKGVLMPSASLQDFYG.

Phosphoserine occurs at positions 170, 195, and 196. Residues 188 to 200 show a composition bias toward acidic residues; sequence DDDDELDSSSDDF. Positions 188 to 215 are disordered; it reads DDDDELDSSSDDFQDAKDTSFEHEKESE. Residues 201–215 show a composition bias toward basic and acidic residues; it reads QDAKDTSFEHEKESE. Position 222 is a phosphoserine (S222). Basic and acidic residues predominate over residues 372 to 384; that stretch reads DDRSNEERDKESS. The disordered stretch occupies residues 372–422; the sequence is DDRSNEERDKESSESENDSEDEDDENDHSKRIISSEAFEEPRRATSKGNSS. A compositionally biased stretch (acidic residues) spans 385-397; that stretch reads ESENDSEDEDDEN. The residue at position 486 (T486) is a Phosphothreonine.

The protein belongs to the VID27 family.

The protein localises to the cytoplasm. Its function is as follows. Has a role in the negative regulation of gluconeogenesis. Required for vacuolar catabolite degradation of fructose-1,6-bisphosphatase (FBPase). The protein is Vacuolar import and degradation protein 27 (VID27) of Saccharomyces cerevisiae (strain ATCC 204508 / S288c) (Baker's yeast).